Here is a 1229-residue protein sequence, read N- to C-terminus: Chitin synthase 4 (1229 aa).

Residues 1-196 are disordered; that stretch reads MSLPERPGAK…IVKEGKRKEK (196 aa). The Cytoplasmic segment spans residues 1–202; that stretch reads MSLPERPGAK…RKEKIPEQLR (202 aa). The segment covering 18-27 has biased composition (basic residues); sequence SYRKSPSRRN. Polar residues predominate over residues 43–66; the sequence is GQHQRGPSVNSFAETIRSPNSNIE. Over residues 92–105 the composition is skewed to basic and acidic residues; it reads IRPERNRIDRDHPN. The span at 137-150 shows a compositional bias: low complexity; it reads SGPPSGSNSASGSG. 2 stretches are compositionally biased toward basic and acidic residues: residues 164–177 and 187–196; these read SGRETVAEKSDNTR and IVKEGKRKEK. The chain crosses the membrane as a helical span at residues 203–223; the sequence is PPSAWNVYCAVITFWSPDFIM. Over 224-240 the chain is Extracellular; the sequence is KCCGMPAKAQRRAWREK. Residues 241–261 form a helical membrane-spanning segment; the sequence is IGLISLILIIMGVVGFLTFGF. Residues 262-495 lie on the Cytoplasmic side of the membrane; the sequence is NQAVCGGPVL…IKVGTVDTDT (234 aa). Residues 496-516 traverse the membrane as a helical segment; sequence VGCIAAKVVLYVSLALILSVV. The Extracellular segment spans residues 517-1054; it reads GARFTLALIF…LCGTFCFSMQ (538 aa). 2 disordered regions span residues 539 to 589 and 601 to 648; these read TSQT…RSSF and GAER…DPYA. The span at 568–581 shows a compositional bias: low complexity; sequence GDVGSSVAGASSSD. Asn-608, Asn-635, and Asn-1030 each carry an N-linked (GlcNAc...) asparagine glycan. Residues 608–648 show a composition bias toward polar residues; the sequence is NKSMPTTMASQASGGYMGPSSTAYRETNESRTSFLKSDPYA. A helical membrane pass occupies residues 1055-1075; the sequence is FVIFIELIGTLVLPAAIAFTF. Topologically, residues 1076 to 1088 are cytoplasmic; the sequence is YVVIISIINQPPQ. The chain crosses the membrane as a helical span at residues 1089–1109; sequence IIPLVLLGLILGLPAILIIIT. Over 1110 to 1114 the chain is Extracellular; it reads AHSWS. Residues 1115-1135 traverse the membrane as a helical segment; the sequence is YVLWMLIYLLSLPVWNFVLPA. Residues 1136-1229 are Cytoplasmic-facing; sequence YAFWKFDDFS…QQYDEYYSDA (94 aa). The tract at residues 1210–1229 is disordered; the sequence is WASAPPHHHQQQYDEYYSDA.

Belongs to the chitin synthase family. Class IV subfamily.

The protein resides in the cell membrane. It catalyses the reaction [(1-&gt;4)-N-acetyl-beta-D-glucosaminyl](n) + UDP-N-acetyl-alpha-D-glucosamine = [(1-&gt;4)-N-acetyl-beta-D-glucosaminyl](n+1) + UDP + H(+). Polymerizes chitin, a structural polymer of the cell wall and septum, by transferring the sugar moiety of UDP-GlcNAc to the non-reducing end of the growing chitin polymer. Might function as a negative regulator on expression of other CHS genes. In Pyricularia oryzae (strain 70-15 / ATCC MYA-4617 / FGSC 8958) (Rice blast fungus), this protein is Chitin synthase 4.